A 174-amino-acid chain; its full sequence is Gamma-crystallin D (174 aa).

Beta/gamma crystallin 'Greek key' domains follow at residues 2–40 and 41–83; these read GKITFYEDRGFQGRCYECSSDHVNLQSYFSRCNSIRVDS and GCWM…RIIP. Residues 84–87 form a connecting peptide region; the sequence is YSGS. Beta/gamma crystallin 'Greek key' domains are found at residues 88–128 and 129–171; these read HKMR…NVLD and GCWI…RRVI.

The protein belongs to the beta/gamma-crystallin family. In terms of assembly, monomer.

Crystallins are the dominant structural components of the vertebrate eye lens. The polypeptide is Gamma-crystallin D (CRYGD) (Macropus fuliginosus (Western gray kangaroo)).